A 245-amino-acid polypeptide reads, in one-letter code: tRNA (guanine-N(1)-)-methyltransferase (245 aa).

S-adenosyl-L-methionine-binding positions include Gly-111 and 130 to 135 (IGDYVL).

It belongs to the RNA methyltransferase TrmD family. Homodimer.

It is found in the cytoplasm. The catalysed reaction is guanosine(37) in tRNA + S-adenosyl-L-methionine = N(1)-methylguanosine(37) in tRNA + S-adenosyl-L-homocysteine + H(+). Specifically methylates guanosine-37 in various tRNAs. This Dictyoglomus turgidum (strain DSM 6724 / Z-1310) protein is tRNA (guanine-N(1)-)-methyltransferase.